A 2084-amino-acid polypeptide reads, in one-letter code: RNA-directed RNA polymerase L (2084 aa).

Residues 20 to 221 (EPGLYDQIYD…IELQKSEEEL (202 aa)) are endonuclease. Positions 80, 112, and 126 each coordinate Mn(2+). Catalysis depends on Lys-145, which acts as the For endonuclease activity. A RdRp catalytic domain is found at 969 to 1172 (SARSLGPGSI…FGIYSSEKST (204 aa)). Asp-1127 contributes to the Mg(2+) binding site. The cap-binding stretch occupies residues 1695 to 1810 (AQSGTLGGFS…TDGCPVRIME (116 aa)).

Belongs to the Bunyavirales RNA polymerase family. In terms of assembly, homomultimer. Interacts with the glycoprotein N; this interaction allows efficient polymerase packaging into virus particles. Interacts with nucleoprotein N. Mn(2+) is required as a cofactor. The cofactor is Mg(2+).

The protein resides in the host Golgi apparatus. It is found in the host endoplasmic reticulum. It localises to the host endoplasmic reticulum-Golgi intermediate compartment. Its subcellular location is the virion. It catalyses the reaction RNA(n) + a ribonucleoside 5'-triphosphate = RNA(n+1) + diphosphate. With respect to regulation, inhibited by Baloxavir acid (BXA). In terms of biological role, RNA-dependent RNA polymerase, which is responsible for the replication and transcription of the viral RNA genome using antigenomic RNA as an intermediate. During transcription, synthesizes subgenomic RNAs and assures their capping by a cap-snatching mechanism, which involves the endonuclease activity cleaving the host capped pre-mRNAs. These short capped RNAs are then used as primers for viral transcription. The 3'-end of subgenomic mRNAs molecules are not polyadenylated. During replication, the polymerase binds the 5' and 3' vRNA extremities at distinct sites. In turn, significant conformational changes occur in the polymerase and in vRNA to initiate active RNA synthesis. As a consequence of the use of the same enzyme for both transcription and replication, these mechanisms need to be well coordinated. This Dabie bandavirus (Severe fever with thrombocytopenia virus) protein is RNA-directed RNA polymerase L.